The chain runs to 163 residues: NADH-quinone oxidoreductase subunit I (163 aa).

4Fe-4S ferredoxin-type domains follow at residues 53–83 (LRRY…IEAG) and 94–123 (VRYD…EGPN). The [4Fe-4S] cluster site is built by Cys-63, Cys-66, Cys-69, Cys-73, Cys-103, Cys-106, Cys-109, and Cys-113.

This sequence belongs to the complex I 23 kDa subunit family. As to quaternary structure, NDH-1 is composed of 14 different subunits. Subunits NuoA, H, J, K, L, M, N constitute the membrane sector of the complex. The cofactor is [4Fe-4S] cluster.

It localises to the cell inner membrane. The catalysed reaction is a quinone + NADH + 5 H(+)(in) = a quinol + NAD(+) + 4 H(+)(out). In terms of biological role, NDH-1 shuttles electrons from NADH, via FMN and iron-sulfur (Fe-S) centers, to quinones in the respiratory chain. The immediate electron acceptor for the enzyme in this species is believed to be ubiquinone. Couples the redox reaction to proton translocation (for every two electrons transferred, four hydrogen ions are translocated across the cytoplasmic membrane), and thus conserves the redox energy in a proton gradient. The chain is NADH-quinone oxidoreductase subunit I from Bartonella henselae (strain ATCC 49882 / DSM 28221 / CCUG 30454 / Houston 1) (Rochalimaea henselae).